The primary structure comprises 134 residues: uncharacterized protein (134 aa).

Transmembrane regions (helical) follow at residues 9–29 (PYFLAFLRIVVAYMFILHGTA), 49–69 (MLLVAGVIEIVGSILLILGLF), and 107–127 (ALLYSLLFLYFVFSGAGACAL).

It belongs to the DoxX family.

The protein localises to the cell membrane. This is an uncharacterized protein from Haemophilus influenzae (strain ATCC 51907 / DSM 11121 / KW20 / Rd).